A 153-amino-acid polypeptide reads, in one-letter code: Large ribosomal subunit protein uL13 (153 aa).

Belongs to the universal ribosomal protein uL13 family. As to quaternary structure, part of the 50S ribosomal subunit.

In terms of biological role, this protein is one of the early assembly proteins of the 50S ribosomal subunit, although it is not seen to bind rRNA by itself. It is important during the early stages of 50S assembly. The protein is Large ribosomal subunit protein uL13 of Azorhizobium caulinodans (strain ATCC 43989 / DSM 5975 / JCM 20966 / LMG 6465 / NBRC 14845 / NCIMB 13405 / ORS 571).